The following is a 237-amino-acid chain: Eukaryotic translation initiation factor 3 subunit K (237 aa).

One can recognise a PCI domain in the interval 44–219; the sequence is CDCNANRALL…EARKAEIRED (176 aa).

It belongs to the eIF-3 subunit K family. In terms of assembly, component of the eukaryotic translation initiation factor 3 (eIF-3) complex.

It is found in the cytoplasm. Component of the eukaryotic translation initiation factor 3 (eIF-3) complex, which is involved in protein synthesis of a specialized repertoire of mRNAs and, together with other initiation factors, stimulates binding of mRNA and methionyl-tRNAi to the 40S ribosome. The eIF-3 complex specifically targets and initiates translation of a subset of mRNAs involved in cell proliferation. This is Eukaryotic translation initiation factor 3 subunit K from Neurospora crassa (strain ATCC 24698 / 74-OR23-1A / CBS 708.71 / DSM 1257 / FGSC 987).